A 141-amino-acid chain; its full sequence is Hemoglobin subunit alpha-A (141 aa).

Positions 1 to 141 (VLSASDKANV…VGTVLTAKYR (141 aa)) constitute a Globin domain. His58 provides a ligand contact to O2. His87 is a heme b binding site.

This sequence belongs to the globin family. In terms of assembly, heterotetramer of two alpha chains and two beta chains. As to expression, red blood cells.

Involved in oxygen transport from the lung to the various peripheral tissues. This is Hemoglobin subunit alpha-A (HBAA) from Sturnus vulgaris (Starling).